The following is a 356-amino-acid chain: MSNSTSTPNTGLSYKDAGVDIEAGDALVDRIKSVAKRTTRPEVMGGLGGFGALCKIPKGYEEPVLVSGTDGVGTKLRLALNLNRHDTIGQDLVAMCVNDLLVCGAEPLFFLDYYATGHLNVDVAANVVTGIGKGCELAGCALVGGETAEMPGMYEGEDYDLAGFAVGVVEQSKIIDGSKVKAGDVLIGVASSGAHSNGYSLLRKILDVKNVDLTQEIDGRSLADAAMEPTRIYVKPVLELCKQVDVHAMAHITGGGLPGNLPRVLPNGAQAVIDEASWEWPELFKLLQREGGVEQFEMYRTFNCGVGMVIAVDAADADKTIQVLNAQGEKSWKIGHIQDNAESIEGADEKIRVIFA.

The protein belongs to the AIR synthase family.

Its subcellular location is the cytoplasm. It catalyses the reaction 2-formamido-N(1)-(5-O-phospho-beta-D-ribosyl)acetamidine + ATP = 5-amino-1-(5-phospho-beta-D-ribosyl)imidazole + ADP + phosphate + H(+). It functions in the pathway purine metabolism; IMP biosynthesis via de novo pathway; 5-amino-1-(5-phospho-D-ribosyl)imidazole from N(2)-formyl-N(1)-(5-phospho-D-ribosyl)glycinamide: step 2/2. This chain is Phosphoribosylformylglycinamidine cyclo-ligase, found in Acinetobacter baylyi (strain ATCC 33305 / BD413 / ADP1).